A 115-amino-acid polypeptide reads, in one-letter code: Putative type I restriction enzyme MpnIIP endonuclease subunit middle part (115 aa).

Functionally, the middle section of a putative type I restriction enzyme that if reconstituted might recognize 5'-GAN(7)TAY-3' and cleave a random distance away. Subunit R is required for both nuclease and ATPase activities, but not for modification. This chain is Putative type I restriction enzyme MpnIIP endonuclease subunit middle part, found in Mycoplasma pneumoniae (strain ATCC 29342 / M129 / Subtype 1) (Mycoplasmoides pneumoniae).